Reading from the N-terminus, the 521-residue chain is Organic cation/carnitine transporter 6 (521 aa).

The Cytoplasmic segment spans residues 1 to 37; that stretch reads MADPISEPLLSHLTDDSGVNEKTRLEALTFDKIVEQS. Residues 38 to 58 traverse the membrane as a helical segment; it reads LSDFGFWQFFQISLVGLALLF. The Extracellular segment spans residues 59–123; sequence DAQQIFITVY…GLECSSSLLR (65 aa). N-linked (GlcNAc...) asparagine glycosylation is present at asparagine 79. Residues 124–144 form a helical membrane-spanning segment; that stretch reads GMPSSAFYIGAIVGGFFLALI. Over 145–154 the chain is Cytoplasmic; it reads PDDSLGRKKL. Residues 155 to 177 traverse the membrane as a helical segment; it reads VLFSTFAMSITSISVIFSTNVWI. The Extracellular segment spans residues 178–182; that stretch reads YTFLK. Residues 183-200 traverse the membrane as a helical segment; sequence FIIGFSRSQTWSYALVLI. Residue 200–207 coordinates ATP; the sequence is ISERVSTR. At 201–213 the chain is on the cytoplasmic side; the sequence is SERVSTRWRPRAT. A helical transmembrane segment spans residues 214 to 234; that stretch reads MIPFTLFVLGFMSLSGIAFLA. Topologically, residues 235 to 241 are extracellular; that stretch reads QDSSWRY. A helical transmembrane segment spans residues 242 to 262; that stretch reads LYLYTSVPAVFYCIFLYLFAL. The Cytoplasmic segment spans residues 263–326; it reads ESPRWLHMQG…FFFRKWAFRR (64 aa). Residues 327-347 form a helical membrane-spanning segment; the sequence is ILVVMIIMFGLGISYYGVPLA. Residues 348-356 are Extracellular-facing; that stretch reads ARDIDVNIY. A helical membrane pass occupies residues 357 to 377; the sequence is LSETLNALVELPTFVITPILL. The Cytoplasmic portion of the chain corresponds to 378–385; that stretch reads ERFNRRSS. The helical transmembrane segment at 386-406 threads the bilayer; it reads VLVNTLLGGASGVLCFVLSIL. Residues 407-412 lie on the Extracellular side of the membrane; that stretch reads GKTEIA. Residues 413-433 form a helical membrane-spanning segment; that stretch reads FAFELGTFFCARIGFNLMAVF. At 434-447 the chain is on the cytoplasmic side; the sequence is MVEMFPTCVRSSAT. A helical membrane pass occupies residues 448–468; that stretch reads MMFRQALVVGGACCPLIASIG. Residues 469–473 lie on the Extracellular side of the membrane; it reads RYIPS. The chain crosses the membrane as a helical span at residues 474–494; the sequence is VSFAIFGIAMSGLGMFVLILP. The Cytoplasmic segment spans residues 495–521; it reads ETKGLSLCDSMEEQEKRDQAVNTSHVC.

This sequence belongs to the major facilitator (TC 2.A.1) superfamily. Organic cation transporter (TC 2.A.1.19) family. Expressed in roots and stems. In the stem of secondary inflorescences, localized to the phloem. Also present in flowers, specifically in the stamen, in the filaments and the connective, and restricted to major veins in leaves.

Its subcellular location is the vacuole membrane. Its function is as follows. High affinity carnitine transporter involved in the active cellular uptake of carnitine. Also transports organic cations. This chain is Organic cation/carnitine transporter 6 (OCT6), found in Arabidopsis thaliana (Mouse-ear cress).